The following is a 232-amino-acid chain: Putative uridine kinase DAS2 (232 aa).

17–24 (GGHATGVG) is an ATP binding site.

It belongs to the uridine kinase family.

It localises to the cytoplasm. The protein resides in the nucleus. It carries out the reaction uridine + ATP = UMP + ADP + H(+). The enzyme catalyses cytidine + ATP = CMP + ADP + H(+). It participates in pyrimidine metabolism; CTP biosynthesis via salvage pathway; CTP from cytidine: step 1/3. It functions in the pathway pyrimidine metabolism; UMP biosynthesis via salvage pathway; UMP from uridine: step 1/1. Functionally, putative uridine kinase identified in a screen for mutants with increased levels of rDNA transcription. The sequence is that of Putative uridine kinase DAS2 (DAS2) from Saccharomyces cerevisiae (strain ATCC 204508 / S288c) (Baker's yeast).